Consider the following 109-residue polypeptide: Flowering-promoting factor 1-like protein 1 (109 aa).

The D-box signature appears at 73–81; that stretch reads RGSLDLISL.

The protein belongs to the FPF1 family. In terms of assembly, interacts with RPT4. Post-translationally, ubiquitinated. RPT4 mediates its proteasome-dependent degradation. In terms of tissue distribution, specifically expressed in the apical meristem, the elongation zone of root tip, steles of the branch zone, and the young lateral root. Also expressed in spikes. Expressed in roots and spikes (at protein level).

It localises to the cytoplasm. The protein localises to the nucleus. GTP-binding protein that functions in the development of root systems, which are mediated by auxin. Acts as a cell cycle regulator during root development. Proteasome-mediated degradation of the protein is necessary for the transition of metaphase to anaphase in mitosis. The polypeptide is Flowering-promoting factor 1-like protein 1 (RAA1) (Oryza sativa subsp. japonica (Rice)).